A 224-amino-acid chain; its full sequence is Probable GTP-binding protein EngB (224 aa).

Residues 31–205 (IGVEIAFAGR…LSILNDWCHP (175 aa)) enclose the EngB-type G domain. Residues 39–46 (GRSNAGKS), 66–70 (GRTQL), 84–87 (DLPG), 151–154 (TKSD), and 184–186 (LSS) contribute to the GTP site. Mg(2+) is bound by residues S46 and T68.

This sequence belongs to the TRAFAC class TrmE-Era-EngA-EngB-Septin-like GTPase superfamily. EngB GTPase family. Requires Mg(2+) as cofactor.

Functionally, necessary for normal cell division and for the maintenance of normal septation. The chain is Probable GTP-binding protein EngB from Shewanella frigidimarina (strain NCIMB 400).